Reading from the N-terminus, the 405-residue chain is uncharacterized protein (405 aa).

3 disordered regions span residues M1–T21, I150–P179, and D285–S405. Over residues K7–D16 the composition is skewed to polar residues. Acidic residues-rich tracts occupy residues S312–E331 and D349–E358. 2 stretches are compositionally biased toward basic residues: residues S365 to S374 and P390 to S405.

This is an uncharacterized protein from Acanthamoeba polyphaga (Amoeba).